Reading from the N-terminus, the 595-residue chain is MFS-type transporter phomT (595 aa).

A compositionally biased stretch (basic and acidic residues) spans 1–11; it reads MESDGKSDRTK. A disordered region spans residues 1–62; the sequence is MESDGKSDRT…HVSADDGPVD (62 aa). Positions 30–48 are enriched in polar residues; it reads PGHSTDTEGNGSDNNNTQV. Asparagine 39 and asparagine 44 each carry an N-linked (GlcNAc...) asparagine glycan. 3 helical membrane-spanning segments follow: residues 91 to 111, 126 to 146, and 156 to 176; these read IILLALELAVLCVALDNTIVA, DVGWYGSAYLLTLCAFQLFFG, and WVFLSCLFIFEIGSLICGVAP. Asparagine 177 is a glycosylation site (N-linked (GlcNAc...) asparagine). The next 3 membrane-spanning stretches (helical) occupy residues 186–206, 217–237, and 245–265; these read AVAGLGAAGIFSGALIIIAFS, ALISAIFGISSVIGPLLGGVF, and WCFYINLPIGGVTAVALVFFL. Asparagine 277 is a glycosylation site (N-linked (GlcNAc...) asparagine). 7 helical membrane-spanning segments follow: residues 290 to 310, 320 to 340, 362 to 382, 409 to 429, 451 to 471, 483 to 503, and 559 to 579; these read IGTAIFLPCIVCILLALQWGG, VVALLVLFGVLLITFVGLQFW, VFTGLVGASFFIMVYYLPIWF, IVGGVFVSFTGYYTPMMYALP, WIGYQILFGLGLGLGMQQGIV, AIGTSLQVFAQMFGGSLFVSV, and VIWTFRTALITTCLSVLAVIF.

This sequence belongs to the major facilitator superfamily. TCR/Tet family.

Its subcellular location is the cell membrane. MFS-type transporter; part of the gene cluster that mediates the biosynthesis of the phomopsins, a group of hexapeptide mycotoxins which infects lupins and causes lupinosis disease in livestock. PhomT is likely to be involved in the cellular export of phomopsins. In Diaporthe leptostromiformis (Lupinosis disease fungus), this protein is MFS-type transporter phomT.